Reading from the N-terminus, the 1465-residue chain is DNA polymerase III PolC-type (1465 aa).

Residues 427-583 (YVVFDVETTG…YDAEATGRLL (157 aa)) enclose the Exonuclease domain.

The protein belongs to the DNA polymerase type-C family. PolC subfamily.

Its subcellular location is the cytoplasm. It carries out the reaction DNA(n) + a 2'-deoxyribonucleoside 5'-triphosphate = DNA(n+1) + diphosphate. In terms of biological role, required for replicative DNA synthesis. This DNA polymerase also exhibits 3' to 5' exonuclease activity. This Streptococcus pyogenes serotype M1 protein is DNA polymerase III PolC-type.